The following is an 817-amino-acid chain: Lon protease (817 aa).

One can recognise a Lon N-terminal domain in the interval 44–239; sequence LPILPLRNTV…ETLRYMNVEL (196 aa). 390 to 397 provides a ligand contact to ATP; the sequence is GPPGVGKT. The Lon proteolytic domain maps to 626–807; it reads NDVAGVVTGL…SEVLAIALTD (182 aa). Residues Ser-713 and Lys-756 contribute to the active site.

The protein belongs to the peptidase S16 family. As to quaternary structure, homohexamer. Organized in a ring with a central cavity.

Its subcellular location is the cytoplasm. The catalysed reaction is Hydrolysis of proteins in presence of ATP.. Functionally, ATP-dependent serine protease that mediates the selective degradation of mutant and abnormal proteins as well as certain short-lived regulatory proteins. Required for cellular homeostasis and for survival from DNA damage and developmental changes induced by stress. Degrades polypeptides processively to yield small peptide fragments that are 5 to 10 amino acids long. Binds to DNA in a double-stranded, site-specific manner. The chain is Lon protease from Flavobacterium johnsoniae (strain ATCC 17061 / DSM 2064 / JCM 8514 / BCRC 14874 / CCUG 350202 / NBRC 14942 / NCIMB 11054 / UW101) (Cytophaga johnsonae).